A 335-amino-acid polypeptide reads, in one-letter code: Large ribosomal subunit protein uL10 (335 aa).

The segment at 304-335 is disordered; it reads GAAAPVEEAPVEEKKEEKKEEAAPAAGLGMLF. Residues 314-325 show a composition bias toward basic and acidic residues; it reads VEEKKEEKKEEA.

Belongs to the universal ribosomal protein uL10 family. As to quaternary structure, part of the 50S ribosomal subunit. Forms part of the ribosomal stalk which helps the ribosome interact with GTP-bound translation factors. Forms a heptameric L10(L12)2(L12)2(L12)2 complex, where L10 forms an elongated spine to which the L12 dimers bind in a sequential fashion.

Forms part of the ribosomal stalk, playing a central role in the interaction of the ribosome with GTP-bound translation factors. This chain is Large ribosomal subunit protein uL10, found in Methanococcus maripaludis (strain C6 / ATCC BAA-1332).